Reading from the N-terminus, the 396-residue chain is MQDSSLNNYANHKNFILMLIILFLMEFARGMYILSYINFLPTVTSIAVAITSLAFSIHFIADASTNFVIGFLLKKFGTKIVLTTGFILAFTSLFLVIWFPASPFVIIFSAMMLGIAVSPIWVIMLSSVEEDKRGKQMGYVYFSWLLGLLVGMVFMNLLIKVHPTRFAFMMSLVVLIAWILYYFVDVKLTNYNTRPVKAQLRQIVDVTKRHLLLFPGILLQGAAIAALVPILPTYATKVINVSTIEYTVAIIIGGIGCAVSMLFLSKLIDNRSRNFMYGVILSGFILYMILIFTLSMIVNIHIVWIIALAIGLMYGILLPAWNTFMARFIKSDEQEETWGVFNSIQGFGSMIGPLFGGLITQFTNNLNNTFYFSALIFLVLAVFYGSYFIANREKAK.

The next 12 membrane-spanning stretches (helical) occupy residues 15–34 (FILM…MYIL), 46–73 (IAVA…GFLL), 80–99 (IVLT…VIWF), 105–126 (VIIF…IMLS), 138–159 (GYVY…NLLI), 165–184 (RFAF…YYFV), 211–231 (LLLF…VPIL), 243–264 (TIEY…MLFL), 276–298 (MYGV…SMIV), 304–326 (WIIA…TFMA), 338–358 (WGVF…FGGL), and 370–390 (FYFS…YFIA).

Belongs to the major facilitator superfamily. LtaA family.

Its subcellular location is the cell membrane. The protein operates within cell wall biogenesis; lipoteichoic acid biosynthesis. Proton-coupled antiporter flippase that catalyzes the translocation, from the inner to the outer leaflet of the cell membrane, of the lipid-linked disaccharide (anchor-LLD) that anchors lipoteichoic acids (LTA) to the cell membrane. The chain is Proton-coupled antiporter flippase LtaA (ltaA) from Staphylococcus aureus (strain MRSA252).